Reading from the N-terminus, the 90-residue chain is U7-theraphotoxin-Hhn1j (90 aa).

An N-terminal signal peptide occupies residues 1 to 19 (MKTAIFTVVLALAVFAVLS). The propeptide occupies 20-50 (FGWEANEKALSEEFTELIHEKEAASETEARE). 3 disulfides stabilise this stretch: Cys-51-Cys-65, Cys-58-Cys-70, and Cys-64-Cys-81.

It belongs to the neurotoxin 10 (Hwtx-1) family. 13 (Hntx-13) subfamily. In terms of tissue distribution, expressed by the venom gland.

The protein localises to the secreted. Its function is as follows. Ion channel inhibitor. The protein is U7-theraphotoxin-Hhn1j of Cyriopagopus hainanus (Chinese bird spider).